The sequence spans 465 residues: MAPSEKKLTEDKKNSSLNKKIETSNSSSEKSSENNNGDSQNNEAPKTFKELGVIDELCEACEKLGFKTPTPIQQEAIPVVLNKRDVIGLAQTGSGKTAAFALPVIQELWNNPSPFFAVVLAPTRELAYQISEQFEAIGGSIGVRSVVIVGGMDMVTQAVALSKKPHVLVCTPGRLMDHLENTKGFSLKNLKYLIMDEADRLLDMDFGPIIDKILKIIPHERRTLLFSATMTSKVEKLQRASLHQPVRVAVSSKFSTVDTLIQRYLFFPFKHKDTYLVYLVNELAGNSIIIFARTVNDTQRLAILLRTLGFSAIPLHGQLSQSNRLGALNKFKSGARSTLVATDVAARGLDIPLVDVVINYDIPTDSKAYIHRVGRTARAGRAGKSIALVTQYDLEPFLRIEATIGKKMQEYEIDKEGVFLLSERVGEAQREAIIQMKEIHDRRKSKGKLHTKRKRDDLDREEQIY.

A compositionally biased stretch (basic and acidic residues) spans M1–E22. The tract at residues M1–A44 is disordered. Residues T23–N36 show a composition bias toward low complexity. A Q motif motif is present at residues K46–Q74. The Helicase ATP-binding domain maps to I77–V248. A90–T97 lines the ATP pocket. A DEAD box motif is present at residues D196–D199. A Helicase C-terminal domain is found at Y275–F419. Over residues R442–R453 the composition is skewed to basic residues. The interval R442–Y465 is disordered. Residues K454–Y465 are compositionally biased toward basic and acidic residues.

Belongs to the DEAD box helicase family. DDX47/RRP3 subfamily. Interacts with the SSU processome.

It is found in the nucleus. The catalysed reaction is ATP + H2O = ADP + phosphate + H(+). ATP-dependent rRNA helicase required for pre-ribosomal RNA processing. Involved in the maturation of the 35S-pre-rRNA and to its cleavage to mature 18S rRNA. The sequence is that of ATP-dependent rRNA helicase rrp3 from Schizosaccharomyces pombe (strain 972 / ATCC 24843) (Fission yeast).